A 181-amino-acid chain; its full sequence is Protein Syd (181 aa).

It belongs to the Syd family.

It is found in the cell inner membrane. In terms of biological role, interacts with the SecY protein in vivo. May bind preferentially to an uncomplexed state of SecY, thus functioning either as a chelating agent for excess SecY in the cell or as a regulatory factor that negatively controls the translocase function. The chain is Protein Syd from Escherichia coli O17:K52:H18 (strain UMN026 / ExPEC).